The sequence spans 105 residues: Large ribosomal subunit protein P1 (105 aa).

M1 carries the post-translational modification Blocked amino end (Met). Residues V65–A76 show a composition bias toward low complexity. The tract at residues V65–G105 is disordered. A compositionally biased stretch (basic and acidic residues) spans A77–S92.

This sequence belongs to the eukaryotic ribosomal protein P1/P2 family. As to quaternary structure, part of the 50S ribosomal subunit. Homodimer, it forms part of the ribosomal stalk which helps the ribosome interact with GTP-bound translation factors. Forms a heptameric uL10/P0(P1)2(P1)2(P1)2 complex, where uL10/P0 forms an elongated spine to which the P1 dimers bind in a sequential fashion.

Functionally, forms part of the ribosomal stalk, playing a central role in the interaction of the ribosome with GTP-bound translation factors. This is Large ribosomal subunit protein P1 from Sulfolobus acidocaldarius (strain ATCC 33909 / DSM 639 / JCM 8929 / NBRC 15157 / NCIMB 11770).